A 1179-amino-acid polypeptide reads, in one-letter code: uncharacterized protein (1179 aa).

This is an uncharacterized protein from Ictaluridae (bullhead catfishes).